Here is a 535-residue protein sequence, read N- to C-terminus: uncharacterized protein (535 aa).

WD repeat units lie at residues 189–226 (RDDF…TRVL), 228–267 (ESIY…PRIS), 269–314 (HHPG…AVLV), 320–359 (AHDE…QPLY), 362–404 (QQNA…KIDE), and 462–505 (VHSV…SWHN).

It belongs to the WD repeat CDC20/Fizzy family.

This is an uncharacterized protein from Schizosaccharomyces pombe (strain 972 / ATCC 24843) (Fission yeast).